The following is a 58-amino-acid chain: Large ribosomal subunit protein bL32 (58 aa).

It belongs to the bacterial ribosomal protein bL32 family.

This chain is Large ribosomal subunit protein bL32, found in Ligilactobacillus salivarius (strain UCC118) (Lactobacillus salivarius).